The chain runs to 157 residues: Succinate dehydrogenase assembly factor 2-B, mitochondrial (157 aa).

A mitochondrion-targeting transit peptide spans 1–22 (MLSQWFRGRHLVVRSALFSRRR).

The protein belongs to the SDHAF2 family. As to quaternary structure, interacts with the flavoprotein subunit within the SDH catalytic dimer.

The protein localises to the mitochondrion matrix. In terms of biological role, plays an essential role in the assembly of succinate dehydrogenase (SDH), an enzyme complex (also referred to as respiratory complex II) that is a component of both the tricarboxylic acid (TCA) cycle and the mitochondrial electron transport chain, and which couples the oxidation of succinate to fumarate with the reduction of ubiquinone (coenzyme Q) to ubiquinol. Required for flavinylation (covalent attachment of FAD) of the flavoprotein subunit of the SDH catalytic dimer. The protein is Succinate dehydrogenase assembly factor 2-B, mitochondrial of Drosophila mojavensis (Fruit fly).